The sequence spans 427 residues: uncharacterized protein (427 aa).

It belongs to the MG032/MG096/MG288 family.

This is an uncharacterized protein from Mycoplasma pneumoniae (strain ATCC 29342 / M129 / Subtype 1) (Mycoplasmoides pneumoniae).